The sequence spans 172 residues: Myosin regulatory light polypeptide 9 (172 aa).

The span at 1–16 (MSSKRAKTKTTKKRPQ) shows a compositional bias: basic residues. The segment at 1-20 (MSSKRAKTKTTKKRPQRATS) is disordered. Ser-2 is modified (N-acetylserine). Thr-19 is modified (phosphothreonine; by MLCK, CIT and ROCK2). The residue at position 20 (Ser-20) is a Phosphoserine; by CDC42BP, CIT, MLCK, PAK1, ROCK1, ROCK2, DAPK1, DAPK2 and ZIPK/DAPK3. 3 consecutive EF-hand domains span residues 29 to 64 (SQIQ…LGKN), 98 to 133 (DPED…MGDR), and 134 to 169 (FTDE…GAKD). The Ca(2+) site is built by Asp-42, Asn-44, Asp-46, and Asp-53.

Myosin is a hexamer of 2 heavy chains and 4 light chains: interacts with myosin heavy chain MYO19. Interacts with LUZP1; the interaction results in inhibition of phosphorylation of MYL9 by DAPK3. Phosphorylation increases the actin-activated myosin ATPase activity and thereby regulates the contractile activity. It is required to generate the driving force in the migration of the cells but not necessary for localization of myosin-2 at the leading edge. Phosphorylation is required for myotube formation. Phosphorylated by DAPK3; DAPK3-mediated phosphorylation is inhibited by LUZP1.

It localises to the cytoplasm. Its subcellular location is the cytoskeleton. It is found in the cell cortex. In terms of biological role, myosin regulatory subunit that plays an important role in regulation of both smooth muscle and nonmuscle cell contractile activity via its phosphorylation. Implicated in cytokinesis, receptor capping, and cell locomotion. In myoblasts, may regulate PIEZO1-dependent cortical actomyosin assembly involved in myotube formation. The sequence is that of Myosin regulatory light polypeptide 9 (MYL9) from Bos taurus (Bovine).